The following is a 673-amino-acid chain: UvrABC system protein B (673 aa).

Residues 26–183 (EGLEDGLAHQ…RRLAELQYTR (158 aa)) enclose the Helicase ATP-binding domain. An ATP-binding site is contributed by 39 to 46 (GVTGSGKT). The short motif at 92–115 (YYDYYQPEAYVPSSDTFIEKDASV) is the Beta-hairpin element. A Helicase C-terminal domain is found at 431-597 (QVDDLLSEIR…GLNKKVVDIL (167 aa)). A UVR domain is found at 633–668 (QQKIHELEGQMMQHAQNLEFEEAAQIRDQLHQLREL).

It belongs to the UvrB family. Forms a heterotetramer with UvrA during the search for lesions. Interacts with UvrC in an incision complex.

It localises to the cytoplasm. The UvrABC repair system catalyzes the recognition and processing of DNA lesions. A damage recognition complex composed of 2 UvrA and 2 UvrB subunits scans DNA for abnormalities. Upon binding of the UvrA(2)B(2) complex to a putative damaged site, the DNA wraps around one UvrB monomer. DNA wrap is dependent on ATP binding by UvrB and probably causes local melting of the DNA helix, facilitating insertion of UvrB beta-hairpin between the DNA strands. Then UvrB probes one DNA strand for the presence of a lesion. If a lesion is found the UvrA subunits dissociate and the UvrB-DNA preincision complex is formed. This complex is subsequently bound by UvrC and the second UvrB is released. If no lesion is found, the DNA wraps around the other UvrB subunit that will check the other stand for damage. The chain is UvrABC system protein B from Salmonella arizonae (strain ATCC BAA-731 / CDC346-86 / RSK2980).